Here is a 233-residue protein sequence, read N- to C-terminus: Large ribosomal subunit protein mL67 (233 aa).

Residues 214 to 233 form a disordered region; the sequence is RQQAQQSEQQSQSELESQTA. A compositionally biased stretch (low complexity) spans 215-233; it reads QQAQQSEQQSQSELESQTA.

Belongs to the mitochondrion-specific ribosomal protein mL67 family.

The protein resides in the nucleus. It is found in the mitochondrion. Its function is as follows. Transcription factor involved in regulation of RNA polymerase II-dependent transcription. Also involved in regulation of mitochondrial DNA recombination, maintenance and repair, and generation of homoplasmic cells. The protein is Large ribosomal subunit protein mL67 (MHR1) of Debaryomyces hansenii (strain ATCC 36239 / CBS 767 / BCRC 21394 / JCM 1990 / NBRC 0083 / IGC 2968) (Yeast).